Reading from the N-terminus, the 1523-residue chain is Slit homolog 3 protein (1523 aa).

An N-terminal signal peptide occupies residues 1–33 (MALGRTGAGAAVRARLALGLALASILSGPPAAA). Positions 34 to 61 (CPTKCTCSAASVDCHGLGLRAVPRGIPR) constitute an LRRNT domain. 6 LRR repeats span residues 62-83 (NAER…DFAG), 86-107 (NLRV…AFQD), 110-131 (QLER…LFQS), 134-155 (KLTR…AFRG), 158-179 (GVKN…AFRA), and 182-203 (DLEI…SFNH). Asn72 carries an N-linked (GlcNAc...) asparagine glycan. N-linked (GlcNAc...) asparagine glycosylation occurs at Asn192. The 51-residue stretch at 215–265 (NHLYCDCHLAWLSDWLRQRRTIGQFTLCMAPVHLRGFSVADVQKKEYVCPG) folds into the LRRCT 1 domain. One can recognise an LRRNT 2 domain in the interval 271–307 (PACNANSLSCPSACSCSNNIVDCRGKGLTEIPANLPE). A disulfide bond links Cys284 and Cys293. 5 LRR repeats span residues 308 to 329 (GIVE…AFTQ), 332 to 353 (KLKR…AFQG), 356 to 377 (SLTS…LFDG), 380 to 401 (SLQL…TFQD), and 404 to 425 (NLNL…LFVP). Residues 437–487 (NPFVCDCHLKWLADYLQDNPIETSGARCSSPRRLANKRISQIKSKKFRCSG) form the LRRCT 2 domain. Cystine bridges form between Cys441–Cys464, Cys443–Cys485, Cys505–Cys511, and Cys509–Cys518. Residues 496-532 (SSECFMDLVCPEKCRCEGTIVDCSNQKLARIPSHLPE) form the LRRNT 3 domain. LRR repeat units follow at residues 533–554 (YTTD…GIFK), 558–579 (NLRK…AFDG), 582–603 (GVQE…MFRG), 606–627 (SLKT…TFAG), and 630–651 (SVRL…AFTT). Residue Asn563 is glycosylated (N-linked (GlcNAc...) asparagine). An N-linked (GlcNAc...) asparagine glycan is attached at Asn622. The 51-residue stretch at 663-713 (NPFNCNCHMAWLGRWLRKRRIVSGNPRCQKPFFLKEIPIQDVAIQDFTCDG) folds into the LRRCT 3 domain. 2 cysteine pairs are disulfide-bonded: Cys667/Cys690 and Cys669/Cys711. Residues 716–752 (ESSCQLSPRCPEQCTCVETVVRCSNRGLHALPKGMPK) enclose the LRRNT 4 domain. LRR repeat units lie at residues 753–774 (DVTE…LSAF), 776–797 (QLTL…TFSN), 800–821 (HLST…AFNG), and 824–845 (SLRV…SFND). 3 N-linked (GlcNAc...) asparagine glycosylation sites follow: Asn784, Asn792, and Asn797. The 51-residue stretch at 857–907 (NPLHCDCSLRWLSEWVKAGYKEPGIARCSSPESMADRLLLTTPTHRFQCKG) folds into the LRRCT 4 domain. EGF-like domains are found at residues 918–953 (NACL…KDCT), 955–994 (PINT…QRCE), 996–1032 (NPDD…ELCD), 1034–1072 (VIDY…KLCE), 1074–1110 (NNDD…LFCE), and 1119–1155 (QTSP…PRCE). 18 disulfides stabilise this stretch: Cys920/Cys931, Cys925/Cys941, Cys943/Cys952, Cys959/Cys970, Cys964/Cys982, Cys984/Cys993, Cys1000/Cys1011, Cys1005/Cys1020, Cys1022/Cys1031, Cys1038/Cys1051, Cys1045/Cys1060, Cys1062/Cys1071, Cys1078/Cys1089, Cys1083/Cys1098, Cys1100/Cys1109, Cys1123/Cys1134, Cys1128/Cys1143, and Cys1145/Cys1154. Asn928 carries an N-linked (GlcNAc...) asparagine glycan. Asn1025 is a glycosylation site (N-linked (GlcNAc...) asparagine). In terms of domain architecture, Laminin G-like spans 1158–1332 (ITVNFVGKDS…PQSLGVSPGC (175 aa)). 2 N-linked (GlcNAc...) asparagine glycosylation sites follow: Asn1181 and Asn1247. 5 cysteine pairs are disulfide-bonded: Cys1305/Cys1332, Cys1355/Cys1364, Cys1372/Cys1382, Cys1377/Cys1391, and Cys1393/Cys1402. EGF-like domains lie at 1340–1365 (HGLC…PLCD) and 1368–1403 (ARDP…ALCD). A glycan (N-linked (GlcNAc...) asparagine) is linked at Asn1406. The EGF-like 9 domain occupies 1408–1444 (SASACSAFKCHHGQCHISDRGEPYCLCQPGFSGHHCE). 7 disulfides stabilise this stretch: Cys1412/Cys1422, Cys1417/Cys1432, Cys1434/Cys1443, Cys1449/Cys1487, Cys1467/Cys1501, Cys1478/Cys1517, and Cys1482/Cys1519. The CTCK domain maps to 1449-1523 (CMGEIVREAI…HLECGCRACS (75 aa)).

The protein resides in the secreted. Functionally, may act as molecular guidance cue in cellular migration, and function may be mediated by interaction with roundabout homolog receptors. In Mus musculus (Mouse), this protein is Slit homolog 3 protein (Slit3).